Consider the following 606-residue polypeptide: V-type proton ATPase catalytic subunit A (606 aa).

Ala-2 bears the N-acetylalanine mark. 240 to 247 is a binding site for ATP; that stretch reads AFGCGKTV.

Belongs to the ATPase alpha/beta chains family. V-ATPase is a heteromultimeric enzyme made up of two complexes: the ATP-hydrolytic V1 complex and the proton translocation V0 complex. The V1 complex consists of three catalytic AB heterodimers that form a heterohexamer, three peripheral stalks each consisting of EG heterodimers, one central rotor including subunits D and F, and the regulatory subunits C and H. The proton translocation complex V0 consists of the proton transport subunit a, a ring of proteolipid subunits c9c'', rotary subunit d, subunits e and f, and the accessory subunits vah-19/Ac45 and vah-20/PRR. Expressed in proximal but not distal germ cells.

It carries out the reaction ATP + H2O + 4 H(+)(in) = ADP + phosphate + 5 H(+)(out). ATP hydrolysis occurs at the interface between the nucleotide-binding domains of subunits A and B. ATP hydrolysis triggers a conformational change in the subunits D and F, which induces a shift of subunit d. The c-ring is subsequently rotated and results in a continuous proton translocation across the membrane. Its function is as follows. Catalytic subunit of the V1 complex of vacuolar(H+)-ATPase (V-ATPase), a multisubunit enzyme composed of a peripheral complex (V1) that hydrolyzes ATP and a membrane integral complex (V0) that translocates protons. V-ATPase is responsible for acidifying and maintaining the pH of intracellular compartments and in some cell types, is targeted to the plasma membrane, where it is responsible for acidifying the extracellular environment. Required along with other vacuolar ATPase components for the removal of protein aggregates which form in immature oocytes in the distal gonad. This removal occurs as the oocytes mature and move to the proximal gonad, is triggered by the introduction of sperm through mating and occurs before fertilization. The introduction of sperm triggers V-ATPase accumulation in proximal oocytes and induces lysosomal acidification which leads to engulfing of protein aggregates by lysosomes and subsequent clearance of the aggregates. Lysosomal acidification also leads to changes in mitochondrial morphology and function. Mitochondria in distal immature oocytes are fragmented, produce high levels of reactive oxygen species (ROS) and have high membrane potential, indicative of metabolic inactivity. In contrast, mitochondria in proximal mature oocytes are tubular with lower ROS levels and membrane potential, indicative of an active metabolic state required for aggregate mobilization before clearance. Involved in receptor-mediated endocytosis. The chain is V-type proton ATPase catalytic subunit A from Caenorhabditis elegans.